Reading from the N-terminus, the 163-residue chain is Shikimate kinase (163 aa).

ATP is bound at residue 10–15 (GVGKTT). Thr-14 contacts Mg(2+). Positions 28, 52, and 75 each coordinate substrate. Arg-116 is a binding site for ATP. A substrate-binding site is contributed by Arg-134. Arg-151 is a binding site for ATP.

Belongs to the shikimate kinase family. As to quaternary structure, monomer. The cofactor is Mg(2+).

The protein resides in the cytoplasm. The catalysed reaction is shikimate + ATP = 3-phosphoshikimate + ADP + H(+). It participates in metabolic intermediate biosynthesis; chorismate biosynthesis; chorismate from D-erythrose 4-phosphate and phosphoenolpyruvate: step 5/7. Catalyzes the specific phosphorylation of the 3-hydroxyl group of shikimic acid using ATP as a cosubstrate. This is Shikimate kinase from Streptococcus pyogenes serotype M49 (strain NZ131).